The sequence spans 598 residues: Biotin-dependent acyl-coenzyme A carboxylase alpha3 subunit (598 aa).

The 445-residue stretch at 8–452 (RIAKVLVANR…SFSVHTRWIE (445 aa)) folds into the Biotin carboxylation domain. The ATP-grasp domain occupies 127–324 (RHIAARAQAP…LVLQQFKIAN (198 aa)). 155 to 216 (AKEHGVPIAI…ERYLDKPRHV (62 aa)) serves as a coordination point for ATP. Residues Glu282, Glu295, and Asn297 each coordinate Mg(2+). The Mn(2+) site is built by Glu282, Glu295, and Asn297. The disordered stretch occupies residues 506–531 (PAGVIRKKPKPRKRGGHTGAATSGDA). Positions 510–521 (IRKKPKPRKRGG) are enriched in basic residues. The region spanning 522-598 (HTGAATSGDA…TQGTVLAEIK (77 aa)) is the Biotinyl-binding domain. Lys564 carries the N6-biotinyllysine modification.

As to quaternary structure, the biotin-dependent acyl-CoA carboxylase complex is composed of AccA3, which contains the biotin carboxylase (BC) and biotin carboxyl carrier protein (BCCP) domains, and an AccD protein, which contains the carboxyl transferase (CT) domain. The cofactor is Mg(2+). Mn(2+) is required as a cofactor. Biotin serves as cofactor.

The catalysed reaction is N(6)-biotinyl-L-lysyl-[protein] + hydrogencarbonate + ATP = N(6)-carboxybiotinyl-L-lysyl-[protein] + ADP + phosphate + H(+). The protein operates within lipid metabolism; fatty acid biosynthesis. Its pathway is lipid metabolism; mycolic acid biosynthesis. Its function is as follows. Component of a biotin-dependent acyl-CoA carboxylase complex. This subunit catalyzes the ATP-dependent carboxylation of the biotin carried by the biotin carboxyl carrier (BCC) domain, resulting in the formation of carboxyl biotin. This chain is Biotin-dependent acyl-coenzyme A carboxylase alpha3 subunit (bccA), found in Mycobacterium leprae (strain TN).